The chain runs to 303 residues: tRNA pseudouridine synthase B (303 aa).

The Nucleophile role is filled by Asp-38.

It belongs to the pseudouridine synthase TruB family. Type 1 subfamily.

It catalyses the reaction uridine(55) in tRNA = pseudouridine(55) in tRNA. Functionally, responsible for synthesis of pseudouridine from uracil-55 in the psi GC loop of transfer RNAs. In Oceanobacillus iheyensis (strain DSM 14371 / CIP 107618 / JCM 11309 / KCTC 3954 / HTE831), this protein is tRNA pseudouridine synthase B.